Here is a 104-residue protein sequence, read N- to C-terminus: Protein S100-A14 (104 aa).

The region spanning 27–61 (KNFHQYSVEGGKETLTPSELRDLVTQQLPHLMPSN) is the EF-hand domain.

This sequence belongs to the S-100 family. In terms of assembly, homodimer. Interacts with AGER. In terms of tissue distribution, expressed at highest levels in colon and at moderate levels in thymus, kidney, liver, small intestine, and lung. Low expression in heart and no expression is seen in brain, skeletal muscle, spleen, placenta and peripheral blood leukocytes.

It localises to the cytoplasm. Modulates P53/TP53 protein levels, and thereby plays a role in the regulation of cell survival and apoptosis. Depending on the context, it can promote cell proliferation or apoptosis. Plays a role in the regulation of cell migration by modulating the levels of MMP2, a matrix protease that is under transcriptional control of P53/TP53. Does not bind calcium. The protein is Protein S100-A14 (S100A14) of Homo sapiens (Human).